We begin with the raw amino-acid sequence, 72 residues long: Phaiodotoxin-3 (72 aa).

In terms of domain architecture, LCN-type CS-alpha/beta spans 1–72; it reads KFIRHKDESF…CFGALESKCA (72 aa). 4 cysteine pairs are disulfide-bonded: Cys-13-Cys-38, Cys-23-Cys-50, Cys-27-Cys-52, and Cys-63-Cys-71.

The protein belongs to the long (4 C-C) scorpion toxin superfamily. Sodium channel inhibitor family. In terms of tissue distribution, expressed by the venom gland.

Its subcellular location is the secreted. Functionally, sodium channel (Nav) specific neurotoxin. This is Phaiodotoxin-3 from Anuroctonus phaiodactylus (Mafia scorpion).